The chain runs to 293 residues: Acetylglutamate kinase (293 aa).

Residues 66-67 (GG), arginine 88, and asparagine 190 each bind substrate.

The protein belongs to the acetylglutamate kinase family. ArgB subfamily.

Its subcellular location is the cytoplasm. The enzyme catalyses N-acetyl-L-glutamate + ATP = N-acetyl-L-glutamyl 5-phosphate + ADP. Its pathway is amino-acid biosynthesis; L-arginine biosynthesis; N(2)-acetyl-L-ornithine from L-glutamate: step 2/4. Its function is as follows. Catalyzes the ATP-dependent phosphorylation of N-acetyl-L-glutamate. This is Acetylglutamate kinase from Thiobacillus denitrificans (strain ATCC 25259 / T1).